A 322-amino-acid polypeptide reads, in one-letter code: MLVDSYGRVIDYLRISVTQRCNFRCLYCMPKTPFEWSAKENLLSFEELFMFVKVCIDEGVKKIRITGGEPLVRKDLYKFIAMISEYKQDIDLALTTNASLLKQQAKDLRQAGLKRINISLDTLKEDVAFKLAQKNILKDVLNGIDEALNLGFNVKFNTVALKGINDSEFIDLLEFAKVRKSQIRFIEFMENYHAYGDLKGLKSAEILNIIAQKYSFKQGEKSSNAPATIYELEDGYKFGIIDPHSHDFCDSCNRIRLSAEGLLIPCLYYDEALSIKKAIRNKDIAGACEVLKTVIKNKSEKNRWAENEANQSSTRAFYQTGG.

In terms of domain architecture, Radical SAM core spans 5 to 217 (SYGRVIDYLR…NIIAQKYSFK (213 aa)). R14 is a binding site for GTP. Residues C21 and C25 each coordinate [4Fe-4S] cluster. Y27 serves as a coordination point for S-adenosyl-L-methionine. Residue C28 participates in [4Fe-4S] cluster binding. R64 contacts GTP. S-adenosyl-L-methionine is bound at residue G68. T95 lines the GTP pocket. S119 is an S-adenosyl-L-methionine binding site. Residue K155 participates in GTP binding. M189 lines the S-adenosyl-L-methionine pocket. [4Fe-4S] cluster-binding residues include C249 and C252. 254–256 (RIR) contributes to the GTP binding site. C266 is a [4Fe-4S] cluster binding site.

The protein belongs to the radical SAM superfamily. MoaA family. In terms of assembly, monomer and homodimer. [4Fe-4S] cluster is required as a cofactor.

The enzyme catalyses GTP + AH2 + S-adenosyl-L-methionine = (8S)-3',8-cyclo-7,8-dihydroguanosine 5'-triphosphate + 5'-deoxyadenosine + L-methionine + A + H(+). The protein operates within cofactor biosynthesis; molybdopterin biosynthesis. Its function is as follows. Catalyzes the cyclization of GTP to (8S)-3',8-cyclo-7,8-dihydroguanosine 5'-triphosphate. This Campylobacter lari (strain RM2100 / D67 / ATCC BAA-1060) protein is GTP 3',8-cyclase.